Consider the following 204-residue polypeptide: Facilitator of iron transport 3 (204 aa).

Residues 1–18 form the signal peptide; the sequence is MKFSSALVLSAVAATALA. 2 disordered regions span residues 84 to 104 and 133 to 175; these read SAAETSSAAETSSADEGSGSS and EGSS…SSTA. Low complexity predominate over residues 135–175; it reads SSNTWSPSSTSTSSEAATSSASTTATTTAETSSSATSSSTA. Gly-182 is lipidated: GPI-anchor amidated glycine. The propeptide at 183–204 is removed in mature form; that stretch reads AADAITAGTGLMGAALAAVMLL.

In terms of processing, the GPI-anchor is attached to the protein in the endoplasmic reticulum and serves to target the protein to the cell surface. There, the glucosamine-inositol phospholipid moiety is cleaved off and the GPI-modified mannoprotein is covalently attached via its lipidless GPI glycan remnant to the 1,6-beta-glucan of the outer cell wall layer.

The protein resides in the secreted. Its subcellular location is the cell wall. It localises to the membrane. Involved in the uptake of non-siderophore and siderophore sources of iron. Has a role in the retention of iron in the cell wall and periplasmic space. The polypeptide is Facilitator of iron transport 3 (FIT3) (Saccharomyces cerevisiae (strain ATCC 204508 / S288c) (Baker's yeast)).